Reading from the N-terminus, the 553-residue chain is Mucolipin-3 (553 aa).

Residues 1-62 are Cytoplasmic-facing; that stretch reads MADPEVVVSS…FWARGRKPWK (62 aa). The segment at 52-62 is interaction with phosphoinositides; it reads KFWARGRKPWK. Residues 63 to 83 traverse the membrane as a helical segment; that stretch reads LAIQILKIAMVTIQLVLFGLS. The Extracellular segment spans residues 84–283; that stretch reads NQMVVAFKEE…VSGSIQKNTH (200 aa). The extracellular/lumenal pore loop stretch occupies residues 104–118; sequence KGYMDRMDDTYAVYT. N-linked (GlcNAc...) asparagine glycans are attached at residues Asn-138, Asn-172, and Asn-205. The cysteines at positions 159 and 185 are disulfide-linked. A disulfide bridge connects residues Cys-238 and Cys-269. Residues 284–304 form a helical membrane-spanning segment; it reads YMMIFDAFVILTCLVSLILCI. Over 305–341 the chain is Cytoplasmic; that stretch reads RSVIRGLQLQQEFVNFFLLHYKKEVSVSDQMEFVNGW. The chain crosses the membrane as a helical span at residues 342–362; that stretch reads YIMIIISDILTIIGSILKMEI. The Extracellular portion of the chain corresponds to 363 to 371; sequence QAKSLTSYD. The helical transmembrane segment at 372–392 threads the bilayer; the sequence is VCSILLGTSTMLVWLGVIRYL. Residues 393–414 are Cytoplasmic-facing; that stretch reads GFFAKYNLLILTLQAALPNVIR. The helical transmembrane segment at 415 to 435 threads the bilayer; that stretch reads FCCCAAMIYLGYCFCGWIVLG. Residues 436 to 443 are Extracellular-facing; that stretch reads PYHDKFRS. Residues 444-464 constitute an intramembrane region (pore-forming); it reads LNMVSECLFSLINGDDMFATF. The Selectivity filter motif lies at 456 to 459; that stretch reads NGDD. At 465–475 the chain is on the extracellular side; sequence AKMQQKSYLVW. A helical membrane pass occupies residues 476-497; it reads LFSRIYLYSFISLFIYMILSLF. Over 498-553 the chain is Cytoplasmic; that stretch reads IALITDTYETIKQYQQDGFPETELRTFISECKDLPNSGKYRLEDDPPVSLFCCCKK.

It belongs to the transient receptor (TC 1.A.4) family. Polycystin subfamily. MCOLN3 sub-subfamily. Homotetramer. Can heterooligomerize with MCOLN1; heteromeric assemblies have different channel properties as compared to the respective homooligomers and may be tissue-specific. May heterooligomerize with TRPV5 to form a functional distinct ion channel. Interacts with GABARAPL2. In terms of processing, N-glycosylated.

The protein resides in the cell membrane. It localises to the early endosome membrane. Its subcellular location is the late endosome membrane. The protein localises to the lysosome membrane. It is found in the cytoplasmic vesicle. The protein resides in the autophagosome membrane. It carries out the reaction Ca(2+)(in) = Ca(2+)(out). The catalysed reaction is K(+)(in) = K(+)(out). The enzyme catalyses Na(+)(in) = Na(+)(out). With respect to regulation, channel activity is activated by PtdIns(3,5)P2 (phosphatidylinositol 3,5-bisphosphate). Inhibited by lumenal H(+) and Na(+). The channel pore shows dynamic behavior and undergoes spontaneous, Ca(2+)-dependent modulation when conducting Ca(2+). Nonselective cation channel probably playing a role in the regulation of membrane trafficking events. Acts as a Ca(2+)-permeable cation channel with inwardly rectifying activity. Mediates release of Ca(2+) from endosomes to the cytoplasm, contributes to endosomal acidification and is involved in the regulation of membrane trafficking and fusion in the endosomal pathway. Also permeable to Mg(2+), Na(+) and K(+). Does not seem to act as mechanosensory transduction channel in inner ear sensory hair cells. Proposed to play a critical role at the cochlear stereocilia ankle-link region during hair-bundle growth. Involved in the regulation of autophagy. Through association with GABARAPL2 may be involved in autophagosome formation possibly providing Ca(2+) for the fusion process. Through a possible and probably tissue-specific heteromerization with MCOLN1 may be at least in part involved in many lysosome-dependent cellular events. Possible heteromeric ion channel assemblies with TRPV5 show pharmacological similarity with TRPML3. The chain is Mucolipin-3 (MCOLN3) from Homo sapiens (Human).